Consider the following 381-residue polypeptide: Sulfite reductase, dissimilatory-type subunit beta (381 aa).

Residues C151, C188, C189, C193, C231, C258, C261, and C264 each coordinate [4Fe-4S] cluster. C193 contacts siroheme. In terms of domain architecture, 4Fe-4S ferredoxin-type spans 249–276 (NTIAIKNERCMYCGNCYTMCPALPISDG).

Heterohexamer of two alpha, two beta and two gamma subunits. Requires [4Fe-4S] cluster as cofactor. It depends on siroheme as a cofactor.

It carries out the reaction [DsrC protein]-trisulfide + NAD(+) + 3 H2O = [DsrC protein]-dithiol + sulfite + NADH + 3 H(+). Catalyzes the reduction of sulfite to sulfide. This is the terminal oxidation reaction in sulfate respiration, a process catalyzed by the sulfate-reducing bacteria. This Nitratidesulfovibrio vulgaris (strain ATCC 29579 / DSM 644 / CCUG 34227 / NCIMB 8303 / VKM B-1760 / Hildenborough) (Desulfovibrio vulgaris) protein is Sulfite reductase, dissimilatory-type subunit beta (dsvB).